The chain runs to 647 residues: tRNA uridine 5-carboxymethylaminomethyl modification enzyme MnmG (647 aa).

Residues 22–27, valine 134, and serine 189 each bind FAD; that span reads GAGHAG. 283 to 297 contacts NAD(+); it reads GARYCPSIEDKIMRF. Glutamine 380 is a binding site for FAD.

Belongs to the MnmG family. As to quaternary structure, homodimer. Heterotetramer of two MnmE and two MnmG subunits. The cofactor is FAD.

The protein resides in the cytoplasm. NAD-binding protein involved in the addition of a carboxymethylaminomethyl (cmnm) group at the wobble position (U34) of certain tRNAs, forming tRNA-cmnm(5)s(2)U34. The polypeptide is tRNA uridine 5-carboxymethylaminomethyl modification enzyme MnmG (Desulfotalea psychrophila (strain LSv54 / DSM 12343)).